Here is a 264-residue protein sequence, read N- to C-terminus: NADH-quinone oxidoreductase subunit I 2 (264 aa).

2 4Fe-4S ferredoxin-type domains span residues 57-86 and 98-127; these read GFLE…ISLE and TQFD…HTRE. Cys-66, Cys-69, Cys-72, Cys-76, Cys-107, Cys-110, Cys-113, and Cys-117 together coordinate [4Fe-4S] cluster. Residues 183–264 are disordered; that stretch reads APQFLPPEPP…AAPAANPESK (82 aa). Residues 197 to 264 show a composition bias toward low complexity; the sequence is AKPAAKAAPA…AAPAANPESK (68 aa).

The protein belongs to the complex I 23 kDa subunit family. As to quaternary structure, NDH-1 is composed of 14 different subunits. Subunits NuoA, H, J, K, L, M, N constitute the membrane sector of the complex. The cofactor is [4Fe-4S] cluster.

The protein resides in the cell inner membrane. The catalysed reaction is a quinone + NADH + 5 H(+)(in) = a quinol + NAD(+) + 4 H(+)(out). Its function is as follows. NDH-1 shuttles electrons from NADH, via FMN and iron-sulfur (Fe-S) centers, to quinones in the respiratory chain. The immediate electron acceptor for the enzyme in this species is believed to be ubiquinone. Couples the redox reaction to proton translocation (for every two electrons transferred, four hydrogen ions are translocated across the cytoplasmic membrane), and thus conserves the redox energy in a proton gradient. This chain is NADH-quinone oxidoreductase subunit I 2, found in Anaeromyxobacter dehalogenans (strain 2CP-C).